A 177-amino-acid chain; its full sequence is ATP synthase subunit delta (177 aa).

The protein belongs to the ATPase delta chain family. F-type ATPases have 2 components, F(1) - the catalytic core - and F(0) - the membrane proton channel. F(1) has five subunits: alpha(3), beta(3), gamma(1), delta(1), epsilon(1). F(0) has three main subunits: a(1), b(2) and c(10-14). The alpha and beta chains form an alternating ring which encloses part of the gamma chain. F(1) is attached to F(0) by a central stalk formed by the gamma and epsilon chains, while a peripheral stalk is formed by the delta and b chains.

Its subcellular location is the cell inner membrane. F(1)F(0) ATP synthase produces ATP from ADP in the presence of a proton or sodium gradient. F-type ATPases consist of two structural domains, F(1) containing the extramembraneous catalytic core and F(0) containing the membrane proton channel, linked together by a central stalk and a peripheral stalk. During catalysis, ATP synthesis in the catalytic domain of F(1) is coupled via a rotary mechanism of the central stalk subunits to proton translocation. In terms of biological role, this protein is part of the stalk that links CF(0) to CF(1). It either transmits conformational changes from CF(0) to CF(1) or is implicated in proton conduction. The polypeptide is ATP synthase subunit delta (Shewanella loihica (strain ATCC BAA-1088 / PV-4)).